A 229-amino-acid chain; its full sequence is Uracil-DNA glycosylase (229 aa).

Asp-65 acts as the Proton acceptor in catalysis.

Belongs to the uracil-DNA glycosylase (UDG) superfamily. UNG family.

It is found in the cytoplasm. It carries out the reaction Hydrolyzes single-stranded DNA or mismatched double-stranded DNA and polynucleotides, releasing free uracil.. Its function is as follows. Excises uracil residues from the DNA which can arise as a result of misincorporation of dUMP residues by DNA polymerase or due to deamination of cytosine. This is Uracil-DNA glycosylase from Oceanobacillus iheyensis (strain DSM 14371 / CIP 107618 / JCM 11309 / KCTC 3954 / HTE831).